The chain runs to 160 residues: MRLSVIAIGRLKQGPERELAERYRERFDETGRKLGFRGLEVHEIAESRARDVPTRMAEEAAAMVALVPERAMLVAMDERGQNLDSIGFAQKLAGWRDQSVPQTIFLIGGADGLSPELRRKAKLSVSFGAATWPHQMLRVMLLEQIYRAATILAGHPYHRA.

Residue G108 participates in S-adenosyl-L-methionine binding.

This sequence belongs to the RNA methyltransferase RlmH family. As to quaternary structure, homodimer.

It localises to the cytoplasm. The catalysed reaction is pseudouridine(1915) in 23S rRNA + S-adenosyl-L-methionine = N(3)-methylpseudouridine(1915) in 23S rRNA + S-adenosyl-L-homocysteine + H(+). Specifically methylates the pseudouridine at position 1915 (m3Psi1915) in 23S rRNA. The polypeptide is Ribosomal RNA large subunit methyltransferase H (Rhodopseudomonas palustris (strain BisA53)).